We begin with the raw amino-acid sequence, 250 residues long: Peptidyl-tRNA hydrolase (250 aa).

Position 14 (Tyr14) interacts with tRNA. The Proton acceptor role is filled by His19. Residues Phe64, Asn66, and Asn112 each coordinate tRNA. A disordered region spans residues Met192 to Asp250. Polar residues predominate over residues His219–Lys229. Residues Met241 to Asp250 show a composition bias toward basic and acidic residues.

This sequence belongs to the PTH family. Monomer.

The protein localises to the cytoplasm. The enzyme catalyses an N-acyl-L-alpha-aminoacyl-tRNA + H2O = an N-acyl-L-amino acid + a tRNA + H(+). Its function is as follows. Hydrolyzes ribosome-free peptidyl-tRNAs (with 1 or more amino acids incorporated), which drop off the ribosome during protein synthesis, or as a result of ribosome stalling. Catalyzes the release of premature peptidyl moieties from peptidyl-tRNA molecules trapped in stalled 50S ribosomal subunits, and thus maintains levels of free tRNAs and 50S ribosomes. This Brucella canis (strain ATCC 23365 / NCTC 10854 / RM-666) protein is Peptidyl-tRNA hydrolase.